A 124-amino-acid polypeptide reads, in one-letter code: uncharacterized protein (124 aa).

Disordered stretches follow at residues 1–31 and 59–124; these read MAQH…TMKP and EDAR…YPQP. 2 stretches are compositionally biased toward polar residues: residues 65–86 and 98–124; these read GMSS…SDAA and TGEQ…YPQP.

This is an uncharacterized protein from Bos taurus (Bovine).